Reading from the N-terminus, the 114-residue chain is MLEVIKAIEAEQVRNDLPEFHVGDTVKVHQKIKEGTRERVQIFEGTVLKRQNGGARETFTVRRVAYNVAVEKTFPVNSPLIEKIQVVRKGKVRRAKLYYLRDRVGKAAKVKERI.

It belongs to the bacterial ribosomal protein bL19 family.

This protein is located at the 30S-50S ribosomal subunit interface and may play a role in the structure and function of the aminoacyl-tRNA binding site. The chain is Large ribosomal subunit protein bL19 from Clostridium botulinum (strain Loch Maree / Type A3).